The primary structure comprises 350 residues: 3'-hydroxy-N-methyl-(S)-coclaurine 4'-O-methyltransferase (350 aa).

Positions 196, 219, 239, 240, and 253 each coordinate S-adenosyl-L-methionine. H257 serves as the catalytic Proton acceptor.

It belongs to the class I-like SAM-binding methyltransferase superfamily. Cation-independent O-methyltransferase family. COMT subfamily. As to quaternary structure, homodimer.

The enzyme catalyses (S)-3'-hydroxy-N-methylcoclaurine + S-adenosyl-L-methionine = (S)-reticuline + S-adenosyl-L-homocysteine + H(+). Its pathway is alkaloid biosynthesis; (S)-reticuline biosynthesis; (S)-reticuline from (S)-norcoclaurine: step 4/4. Its function is as follows. Catalyzes the transfer of the methyl group to the 4'-hydroxyl group of 3'-hydroxy-N-methylcoclaurine to form reticuline. The polypeptide is 3'-hydroxy-N-methyl-(S)-coclaurine 4'-O-methyltransferase (Coptis japonica (Japanese goldthread)).